The sequence spans 544 residues: Pentatricopeptide repeat-containing protein At1g66345, mitochondrial (544 aa).

The transit peptide at 1–116 directs the protein to the mitochondrion; sequence MASALRRLVE…RNLRHGIKSY (116 aa). PPR repeat units follow at residues 163-197, 198-232, 233-267, 268-302, 303-337, 338-372, 373-407, 408-442, 443-477, 478-512, and 513-544; these read TPLVFDLLVQCYAKIRYLELGFDVFKRLCDCGFTL, SVITLNTLIHYSSKSKIDDLVWRIYECAIDKRIYP, NEITIRIMIQVLCKEGRLKEVVDLLDRICGKRCLP, SVIVNTSLVFRVLEEMRIEESMSLLKRLLMKNMVV, DTIGYSIVVYAKAKEGDLVSARKVFDEMLQRGFSA, NSFVYTVFVRVCCEKGDVKEAERLLSEMEESGVSP, YDETFNCLIGGFARFGWEEKGLEYCEVMVTRGLMP, SCSAFNEMVKSVSKIENVNRANEILTKSIDKGFVP, DEHTYSHLIRGFIEGNDIDQALKLFYEMEYRKMSP, GFEVFRSLIVGLCTCGKVEAGEKYLKIMKKRLIEP, and NADIYDALIKAFQKIGDKTNADRVYNEMISVR.

It belongs to the PPR family. P subfamily.

The protein resides in the mitochondrion. The chain is Pentatricopeptide repeat-containing protein At1g66345, mitochondrial from Arabidopsis thaliana (Mouse-ear cress).